Reading from the N-terminus, the 438-residue chain is uncharacterized protein (438 aa).

This is an uncharacterized protein from Methanocaldococcus jannaschii (strain ATCC 43067 / DSM 2661 / JAL-1 / JCM 10045 / NBRC 100440) (Methanococcus jannaschii).